The sequence spans 575 residues: Acyloxyacyl hydrolase (575 aa).

A signal peptide spans 1-25 (MKSPWRILVVSPLLLLPLHSSTSRA). The propeptide occupies 26-34 (HDNQPGTIR). One can recognise a Saposin B-type domain in the interval 36 to 117 (DHYTCVGCVL…HTLEFCKQEP (82 aa)). The important for enzyme activity, localization to cytoplasmic vesicles, and protein stability stretch occupies residues 37–69 (HYTCVGCVLVVSVIEQLAQVHNSTVQASMERLC). 8 cysteine pairs are disulfide-bonded: cysteine 40-cysteine 113, cysteine 43-cysteine 107, cysteine 69-cysteine 82, cysteine 122-cysteine 453, cysteine 159-cysteine 168, cysteine 205-cysteine 229, cysteine 248-cysteine 328, and cysteine 375-cysteine 459. The N-linked (GlcNAc...) asparagine glycan is linked to asparagine 58. The tract at residues 172–176 (KLAIK) is lipopolysaccharide binding. Residues aspartate 183, aspartate 185, aspartate 187, tyrosine 189, aspartate 204, asparagine 206, aspartate 207, aspartate 209, valine 212, aspartate 222, aspartate 226, asparagine 228, asparagine 230, isoleucine 232, and glutamate 244 each contribute to the Ca(2+) site. Residue asparagine 206 is glycosylated (N-linked (GlcNAc...) asparagine). Serine 262 is an active-site residue. Asparagine 466 carries N-linked (GlcNAc...) asparagine glycosylation.

In terms of assembly, heterodimer of the large and small subunits; disulfide-linked. Requires Ca(2+) as cofactor. In terms of processing, cleaved into a large and a small subunit. Post-translationally, the small subunit is N-glycosylated.

It localises to the secreted. It is found in the cytoplasmic vesicle. It carries out the reaction a 3-(acyloxy)acyl derivative of bacterial toxin + H2O = a 3-hydroxyacyl derivative of bacterial toxin + a fatty acid + H(+). In terms of biological role, removes the secondary (acyloxyacyl-linked) fatty acyl chains from the lipid A region of bacterial lipopolysaccharides (LPS). By breaking down LPS, terminates the host response to bacterial infection and prevents prolonged and damaging inflammatory responses. In peritoneal macrophages, seems to be important for recovery from a state of immune tolerance following infection by Gram-negative bacteria. This is Acyloxyacyl hydrolase from Oryctolagus cuniculus (Rabbit).